The primary structure comprises 194 residues: Imidazoleglycerol-phosphate dehydratase (194 aa).

It belongs to the imidazoleglycerol-phosphate dehydratase family.

Its subcellular location is the cytoplasm. It carries out the reaction D-erythro-1-(imidazol-4-yl)glycerol 3-phosphate = 3-(imidazol-4-yl)-2-oxopropyl phosphate + H2O. It participates in amino-acid biosynthesis; L-histidine biosynthesis; L-histidine from 5-phospho-alpha-D-ribose 1-diphosphate: step 6/9. This is Imidazoleglycerol-phosphate dehydratase from Streptococcus sanguinis (strain SK36).